The following is a 250-amino-acid chain: ADPR responsive transcriptional repressor NtrR (250 aa).

Positions 26 to 157 constitute a Nudix hydrolase domain; sequence LMTVDMAIFS…DHHDLLQQAF (132 aa). The short motif at 62-85 is the Nudix box element; it reads GFVDLEQDQNLMACAHRKLLEKTG. A winged helix-like DNA-binding region region spans residues 164–237; the sequence is TRYTALPISL…RFALQDYDFN (74 aa).

Its activity is regulated as follows. DNA binding is efficiently suppressed in the presence of ADP-ribose (ADPR) or phospho-ADPR. Accumulation of ADPR resulting from NAD degradation may be interpreted by the cell as a signal to activate recycling of nicotinamide. In terms of biological role, involved in the transcriptional regulation of the nondeamidating salvage pathway for production of NAD from nicotinamide. Represses expression of the prs-nadV-nrtR operon by binding to the DNA region located upstream of the operon, thus blocking the nondeamidating pathway. The sequence is that of ADPR responsive transcriptional repressor NtrR from Acinetobacter baylyi (strain ATCC 33305 / BD413 / ADP1).